The following is a 138-amino-acid chain: Transmembrane protein 170A (138 aa).

The Lumenal segment spans residues 1–44; it reads MEGSEAGGGGLLQQILSLRLVPRVGNGTTYSSPLSTFPEMWYGV. A glycan (N-linked (GlcNAc...) asparagine) is linked at Asn26. A helical transmembrane segment spans residues 45–65; that stretch reads FLWALVSSLSFHVPAALLALF. Topologically, residues 66 to 79 are cytoplasmic; it reads TLRHHKYGRFMSVS. A helical transmembrane segment spans residues 80–100; sequence LLLMGIVGPITAGILTSAAIA. Over 101-110 the chain is Lumenal; that stretch reads GVYRAAGKKM. The chain crosses the membrane as a helical span at residues 111–131; that stretch reads IPFEALIFEVGQTFCVVVVSF. Topologically, residues 132–138 are cytoplasmic; the sequence is LRILATL.

This sequence belongs to the TMEM170 family.

It localises to the endoplasmic reticulum membrane. The protein localises to the nucleus envelope. May regulate membrane morphogenesis in the endoplasmic reticulum (ER) by promoting ER sheet formation at the expense of ER tubules. The chain is Transmembrane protein 170A (TMEM170A) from Gallus gallus (Chicken).